The primary structure comprises 347 residues: CDK2-associated and cullin domain-containing protein 1 (347 aa).

Residues Met1–Leu11 are compositionally biased toward acidic residues. Disordered stretches follow at residues Met1–Gly63 and Arg320–Arg347. Residues Gln34 to Pro49 are compositionally biased toward pro residues.

The protein belongs to the cullin family. In terms of assembly, interacts with CDK2.

Functionally, cell cycle associated protein capable of promoting cell proliferation through the activation of CDK2 at the G1/S phase transition. This chain is CDK2-associated and cullin domain-containing protein 1 (Cacul1), found in Rattus norvegicus (Rat).